Consider the following 956-residue polypeptide: Matrilin-2 (956 aa).

Positions 1–23 are cleaved as a signal peptide; the sequence is MEKMLVGCLLMLGQLFLVLPVDG. Residues 57 to 232 enclose the VWFA 1 domain; the sequence is DLVFIIDSSR…SQIESLTSVF (176 aa). An N-linked (GlcNAc...) asparagine glycan is attached at N221. EGF-like domains lie at 238–278, 279–319, 320–360, 361–401, 402–442, 443–483, 484–524, 525–565, 566–606, and 607–647; these read TVHM…KTCR, IQDL…KRCT, AVDY…KTCS, KIDY…KTCR, RINY…KTCS, RVDH…KTCS, RADY…KTCA, KLDS…KTCR, RKDV…KRCR, and RKNV…KHCK. 30 cysteine pairs are disulfide-bonded: C242-C253, C249-C262, C264-C277, C283-C294, C290-C303, C305-C318, C324-C335, C331-C344, C346-C359, C365-C376, C372-C385, C387-C400, C406-C417, C413-C426, C428-C441, C447-C458, C454-C467, C469-C482, C488-C499, C495-C508, C510-C523, C529-C540, C536-C549, C551-C564, C570-C581, C577-C590, C592-C605, C611-C622, C618-C631, and C633-C646. The region spanning 655–830 is the VWFA 2 domain; sequence DLVFVIDGSK…STMGEISEKL (176 aa). N890 carries N-linked (GlcNAc...) asparagine glycosylation. Residues 917-955 are a coiled coil; sequence KCENLILFQNVANEEVRKLTQRLEEMTQRMEALENRLKY.

In terms of tissue distribution, detected in a variety of organs, including calvaria, uterus, heart and brain, as well as fibroblast and osteoblast cell lines.

Its subcellular location is the secreted. In terms of biological role, involved in matrix assembly. This chain is Matrilin-2 (Matn2), found in Mus musculus (Mouse).